The sequence spans 531 residues: Aspartate--tRNA ligase, cytoplasmic (531 aa).

The segment at 1–45 (MADAAEGEQPKLSKKELNKLARKAKKDEKAGEKGGNQQQAAAMDQ) is disordered. A compositionally biased stretch (basic and acidic residues) spans 8 to 32 (EQPKLSKKELNKLARKAKKDEKAGE). Residue glutamate 259 coordinates L-aspartate. Residues 281-284 (QLYK) are aspartate. Arginine 303 is a binding site for L-aspartate. ATP contacts are provided by residues 303–305 (RAE), 311–313 (RHM), and glutamate 454. The L-aspartate site is built by serine 457 and arginine 461. An ATP-binding site is contributed by 502–505 (GLER).

The protein belongs to the class-II aminoacyl-tRNA synthetase family. Type 2 subfamily. As to quaternary structure, homodimer.

It is found in the cytoplasm. It catalyses the reaction tRNA(Asp) + L-aspartate + ATP = L-aspartyl-tRNA(Asp) + AMP + diphosphate. This chain is Aspartate--tRNA ligase, cytoplasmic, found in Caenorhabditis elegans.